Here is a 641-residue protein sequence, read N- to C-terminus: YAP1-binding protein 2 (641 aa).

The protein belongs to the YBP1 family.

The protein resides in the cytoplasm. In terms of biological role, involved in oxidative stress response and redox homeostasis. Required for hydrogen peroxide-induced activation of YAP1. Acts in a parallele pathway to YBP1. This Saccharomyces cerevisiae (strain ATCC 204508 / S288c) (Baker's yeast) protein is YAP1-binding protein 2.